Consider the following 339-residue polypeptide: Phenylalanine--tRNA ligase alpha subunit (339 aa).

Glutamate 262 lines the Mg(2+) pocket.

It belongs to the class-II aminoacyl-tRNA synthetase family. Phe-tRNA synthetase alpha subunit type 1 subfamily. As to quaternary structure, tetramer of two alpha and two beta subunits. The cofactor is Mg(2+).

The protein resides in the cytoplasm. The enzyme catalyses tRNA(Phe) + L-phenylalanine + ATP = L-phenylalanyl-tRNA(Phe) + AMP + diphosphate + H(+). The chain is Phenylalanine--tRNA ligase alpha subunit from Neisseria gonorrhoeae (strain ATCC 700825 / FA 1090).